The sequence spans 398 residues: Phosphoglycerate kinase (398 aa).

Residues 21 to 23 (DFN), Arg-36, 59 to 62 (HLGR), Arg-119, and Arg-157 each bind substrate. ATP is bound by residues Lys-208, Gly-296, Glu-327, and 354–357 (GGDS).

This sequence belongs to the phosphoglycerate kinase family. As to quaternary structure, monomer.

It is found in the cytoplasm. It carries out the reaction (2R)-3-phosphoglycerate + ATP = (2R)-3-phospho-glyceroyl phosphate + ADP. It functions in the pathway carbohydrate degradation; glycolysis; pyruvate from D-glyceraldehyde 3-phosphate: step 2/5. The protein is Phosphoglycerate kinase of Streptococcus pyogenes serotype M3 (strain ATCC BAA-595 / MGAS315).